Here is a 390-residue protein sequence, read N- to C-terminus: uncharacterized protein (390 aa).

It belongs to the peptidase M24 family.

This is an uncharacterized protein from Sinorhizobium fredii (strain NBRC 101917 / NGR234).